The chain runs to 711 residues: F-box only protein 34 (711 aa).

Disordered stretches follow at residues 1 to 36 (MHLK…VNDE), 249 to 271 (SESY…EVGE), 337 to 372 (DTQV…ASQD), and 494 to 529 (YSQL…GSAE). Basic and acidic residues predominate over residues 10-23 (QKKEHPPEVSRETQ). The segment covering 354–364 (RADRCSPKEDQ) has biased composition (basic and acidic residues). Residues 572–624 (QQYMAFLPHHIMVKIFRLLPTKSLVALKCTCCYFKFIIEYYNIRPADSRWVRD) form the F-box domain.

Directly interacts with SKP1 and CUL1.

Substrate-recognition component of the SCF (SKP1-CUL1-F-box protein)-type E3 ubiquitin ligase complex. This chain is F-box only protein 34 (FBXO34), found in Homo sapiens (Human).